We begin with the raw amino-acid sequence, 257 residues long: Small ribosomal subunit protein uS3 (257 aa).

The KH type-2 domain maps to 40–110; sequence IRKYLSTKYK…LVSLKVVEVQ (71 aa). The segment at 223–257 is disordered; sequence ANKEFSRSSKPKKGSFNRSSRSKNTKPAPKQAVSE. Basic residues predominate over residues 231 to 246; the sequence is SKPKKGSFNRSSRSKN.

Belongs to the universal ribosomal protein uS3 family. As to quaternary structure, part of the 30S ribosomal subunit. Forms a tight complex with proteins S10 and S14.

In terms of biological role, binds the lower part of the 30S subunit head. Binds mRNA in the 70S ribosome, positioning it for translation. The polypeptide is Small ribosomal subunit protein uS3 (Ureaplasma parvum serovar 3 (strain ATCC 27815 / 27 / NCTC 11736)).